The following is a 600-amino-acid chain: Alpha-N-acetylgalactosaminide alpha-2,6-sialyltransferase 1 (600 aa).

Residues 1 to 14 (MRSCLWRCRHLSQG) lie on the Cytoplasmic side of the membrane. A helical; Signal-anchor for type II membrane protein transmembrane segment spans residues 15 to 35 (VQWSLLLAVLVFFLFALPSFI). Topologically, residues 36 to 600 (KEPQTKPSRH…PGPGTAKAKN (565 aa)) are lumenal. Disordered regions lie at residues 38–191 (PQTK…AATT) and 208–248 (GAVS…TQRN). Positions 46–55 (QRTENIKERS) are enriched in basic and acidic residues. 3 stretches are compositionally biased toward polar residues: residues 84–94 (NALNTQTQPKA), 151–179 (TEAQSWKSQDTKTTQGNGGQTRKLTASRT), and 209–219 (AVSTRTRQKGV). 2 disulfides stabilise this stretch: cysteine 279/cysteine 362 and cysteine 365/cysteine 533. 5 N-linked (GlcNAc...) asparagine glycosylation sites follow: asparagine 300, asparagine 311, asparagine 331, asparagine 375, and asparagine 460.

The protein belongs to the glycosyltransferase 29 family. Glycosylated; autosialylated. Expression is restricted to the gastrointestinal tract. Highly expressed in goblet cells. Also expressed in various tumor cells.

The protein localises to the golgi apparatus membrane. The enzyme catalyses a beta-D-galactosyl-(1-&gt;3)-N-acetyl-alpha-D-galactosaminyl derivative + CMP-N-acetyl-beta-neuraminate = a beta-D-galactosyl-(1-&gt;3)-[N-acetyl-alpha-neuraminyl-(2-&gt;6)]-N-acetyl-alpha-D-galactosaminyl derivative + CMP + H(+). The catalysed reaction is a 3-O-[N-acetyl-alpha-D-galactosaminyl]-L-seryl-[protein] + CMP-N-acetyl-beta-neuraminate = a 3-O-[N-acetyl-alpha-neuraminosyl-(2-&gt;6)-N-acetyl-alpha-D-galactosaminyl]-L-seryl-[protein] + CMP + H(+). It catalyses the reaction a 3-O-[N-acetyl-alpha-D-galactosaminyl]-L-threonyl-[protein] + CMP-N-acetyl-beta-neuraminate = a 3-O-[N-acetyl-alpha-neuraminosyl-(2-&gt;6)-N-acetyl-alpha-D-galactosaminyl]-L-threonyl-[protein] + CMP + H(+). It carries out the reaction a 3-O-[beta-D-galactosyl-(1-&gt;3)-N-acetyl-alpha-D-galactosaminyl]-L-seryl-[protein] + CMP-N-acetyl-beta-neuraminate = a 3-O-{beta-D-galactosyl-(1-&gt;3)-[N-acetyl-alpha-neuraminosyl-(2-&gt;6)]-N-acetyl-alpha-D-galactosaminyl}-L-seryl-[protein] + CMP + H(+). The enzyme catalyses a 3-O-[beta-D-galactosyl-(1-&gt;3)-N-acetyl-alpha-D-galactosaminyl]-L-threonyl-[protein] + CMP-N-acetyl-beta-neuraminate = a 3-O-{beta-D-galactosyl-(1-&gt;3)-[N-acetyl-alpha-neuraminosyl-(2-&gt;6)]-N-acetyl-alpha-D-galactosaminyl}-L-threonyl-[protein] + CMP + H(+). The catalysed reaction is a 3-O-[N-acetyl-alpha-neuraminyl-(2-&gt;3)-beta-D-galactosyl-(1-&gt;3)-N-acetyl-alpha-D-galactosaminyl]-L-threonyl-[protein] + CMP-N-acetyl-beta-neuraminate = a 3-O-{alpha-Neu5Ac-(2-&gt;3)-beta-D-Gal-(1-&gt;3)-[alpha-Neu5Ac-(2-&gt;6)]-alpha-D-GalNAc}-L-threonyl-[protein] + CMP + H(+). The protein operates within protein modification; protein glycosylation. Its function is as follows. Protein sialyltransferase specifically expressed in goblet cells that plays a key role in intestinal host-commensal homeostasis. Conjugates sialic acid with an alpha-2-6 linkage to N-acetylgalactosamine (GalNAc) glycan chains linked to serine or threonine in glycoproteins. Catalyzes the formation of the sialyl-Tn (S-Tn) antigen, an antigen found in intestinal goblet cells, as well as ulcerative colitis (UC) and various cancers. Protein sialylation in globlet cells is essential for mucus integrity and is required to protect the intestinal mucus against excessive bacterial proteolytic degradation. The sequence is that of Alpha-N-acetylgalactosaminide alpha-2,6-sialyltransferase 1 from Homo sapiens (Human).